Consider the following 111-residue polypeptide: Cytochrome c (111 aa).

An N-acetylalanine modification is found at Ala1. Cys22, Cys25, and His26 together coordinate heme c. Lys80 is subject to N6,N6,N6-trimethyllysine. Met88 contacts heme c. Lys94 bears the N6,N6,N6-trimethyllysine mark.

It belongs to the cytochrome c family. Post-translationally, binds 1 heme c group covalently per subunit.

The protein localises to the mitochondrion intermembrane space. Its function is as follows. Electron carrier protein. The oxidized form of the cytochrome c heme group can accept an electron from the heme group of the cytochrome c1 subunit of cytochrome reductase. Cytochrome c then transfers this electron to the cytochrome oxidase complex, the final protein carrier in the mitochondrial electron-transport chain. This is Cytochrome c from Cucurbita maxima (Pumpkin).